Consider the following 595-residue polypeptide: Leiomodin-1 (595 aa).

Disordered stretches follow at residues 1–69, 81–322, and 467–568; these read MSKV…EAML, QREM…KVKN, and DKQR…QEKN. The residue at position 12 (S12) is a Phosphoserine. Residues 27 to 40 are compositionally biased toward acidic residues; it reads EEMEELEKELDVVD. Composition is skewed to basic and acidic residues over residues 81–110, 117–127, 134–192, 200–223, 230–249, 257–287, 467–476, and 484–493; these read QREM…DASR, QDSDLGKEPKK, FSRD…EKTG, SRDK…KLTA, GRRE…KPED, RDWR…KAPE, DKQRQKRLQE, and SGEKKDRLEV. S85 carries the post-translational modification Phosphoserine. S135 is subject to Phosphoserine. 8 tandem repeats follow at residues 165-179, 180-195, 196-211, 212-226, 227-240, 242-255, 256-271, and 272-288. Positions 165 to 288 are 8 X approximate tandem repeats; sequence AAVDRKESGK…EESKTKAPEK (124 aa). The 5 X 4 AA approximate tandem repeats stretch occupies residues 503–522; sequence SPKPSPQPSPKPAPKNSPKK. 2 stretches are compositionally biased toward pro residues: residues 505–517 and 527–538; these read KPSP…PAPK and AAPPPPPPPLAP. Position 550 is a phosphoserine (S550). Residues 569–588 form the WH2 domain; that stretch reads SRDQLLAAIRSSNLKQLKKV.

Belongs to the tropomodulin family. In terms of tissue distribution, detected in aorta, urinary bladder and uterus (at protein level). Detected in smooth muscle cells. Detected in aorta, bladder, colon, intestine, stomach and uterus.

Its subcellular location is the cytoplasm. The protein resides in the myofibril. It is found in the sarcomere. The protein localises to the cytoskeleton. In terms of biological role, required for proper contractility of visceral smooth muscle cells. Mediates nucleation of actin filaments. In Mus musculus (Mouse), this protein is Leiomodin-1 (Lmod1).